Reading from the N-terminus, the 733-residue chain is Non-secreted LysM effector LCP1 (733 aa).

The first 22 residues, 1-22 (MMRRPWLLSALVAWVKLPSVQG), serve as a signal peptide directing secretion. LysM domains follow at residues 211 to 256 (SEYT…KLCI) and 261 to 309 (DVYV…TICI). N-linked (GlcNAc...) asparagine glycans are attached at residues N298, N304, N340, N350, N381, N432, N442, N455, and N538. The LysM 3 domain maps to 347–393 (LFHNVTAGDDCGTIGLKYSISLDDFIFLNSMIWPNCTNLWLRASYCV). Residues 605 to 629 (SPITSSAPTSTTASSKTSSSAAQPT) show a composition bias toward low complexity. Positions 605–637 (SPITSSAPTSTTASSKTSSSAAQPTNVSTDGTC) are disordered. The N-linked (GlcNAc...) asparagine glycan is linked to N630. Chitin-binding type-1 domains lie at 634–680 (DGTC…KCDA) and 688–733 (DGTC…GVCT). 8 disulfide bridges follow: C637–C654, C645–C660, C653–C667, C671–C678, C691–C708, C699–C714, C707–C721, and C725–C732.

The protein belongs to the secreted LysM effector family.

The protein localises to the secreted. It localises to the cell membrane. It is found in the vacuole. Its function is as follows. Secreted effector that enables the plant pathogenic fungus to manipulate host defenses for successful infection. Not involved in host recognition and penetration but suppresses host cell death and promotes fumonisin biosynthesis while the pathogen colonizes maize kernels. In Gibberella moniliformis (strain M3125 / FGSC 7600) (Maize ear and stalk rot fungus), this protein is Non-secreted LysM effector LCP1.